The chain runs to 236 residues: CHD1 helical C-terminal domain containing protein 1 (236 aa).

The interval 44–145 is CHD1 helical C-terminal domain (CHCT); it reads LDQDTFKTCK…SSQPAKFLVT (102 aa). The interval 184 to 236 is disordered; that stretch reads LSNMQTPGQGSPLPGQPRSQDHVKKDSLRELSQKPKLKRKRIKEAPETPETEP. The segment covering 202-216 has biased composition (basic and acidic residues); that stretch reads SQDHVKKDSLRELSQ.

It localises to the cytoplasm. The protein resides in the nucleus. Its function is as follows. May play a role in regulation of apoptosis. The chain is CHD1 helical C-terminal domain containing protein 1 from Homo sapiens (Human).